Reading from the N-terminus, the 975-residue chain is E3 ubiquitin-protein ligase BRE1A (975 aa).

The interval 1 to 37 (MSGIGSKRAAGEPGTSVPPEKKTAVEDSGTTVETIKL) is disordered. Position 21 is an N6-acetyllysine (lysine 21). At serine 41 the chain carries Phosphoserine. Positions 43-90 (TEELDIRTLQTKNRKLAEMLDQRQAIEDELREHIEKLERRQATDDASL) form a coiled coil. The segment at 125–155 (KALVVPEPEPDSDSNQERKDDRERGEGQEPA) is disordered. Phosphoserine occurs at positions 136 and 138. Residues 139-151 (NQERKDDRERGEG) are compositionally biased toward basic and acidic residues. Coiled coils occupy residues 168–375 (EEME…EEVV) and 429–898 (SLHK…TTKK). N6-acetyllysine is present on residues lysine 348 and lysine 510. A disordered region spans residues 507 to 622 (DLNKTRLRSG…GKHDDGRKKE (116 aa)). Serine 522 is subject to Phosphoserine. A compositionally biased stretch (basic and acidic residues) spans 527-540 (EDPKDEPAELKQDS). Polar residues predominate over residues 543–552 (LATQSAASKA). Positions 558-622 (NEIKSKRDEE…GKHDDGRKKE (65 aa)) are enriched in basic and acidic residues. Serine 562 carries the post-translational modification Phosphoserine. The RING-type zinc-finger motif lies at 922–961 (CPCCNMRKKDAVLTKCFHVFCFECVKTRYDTRQRKCPKCN).

It belongs to the BRE1 family. As to quaternary structure, component of the RNF20/40 complex (also known as BRE1 complex) probably composed of 2 copies of RNF20/BRE1A and 2 copies of RNF40/BRE1B. Interacts with UBE2E1/UBCH6. Interacts with p53/TP53 and WAC. Interacts with PAF1; the interaction mediates the association of the PAF1 and RNF20/40 complexes which is a prerequsite for recruitment of UBE2A/B. Interacts with PA2G4. Interacts with FBXL19.

It localises to the nucleus. The enzyme catalyses S-ubiquitinyl-[E2 ubiquitin-conjugating enzyme]-L-cysteine + [acceptor protein]-L-lysine = [E2 ubiquitin-conjugating enzyme]-L-cysteine + N(6)-ubiquitinyl-[acceptor protein]-L-lysine.. It functions in the pathway protein modification; protein ubiquitination. In terms of biological role, component of the RNF20/40 E3 ubiquitin-protein ligase complex that mediates monoubiquitination of 'Lys-120' of histone H2B (H2BK120ub1). H2BK120ub1 gives a specific tag for epigenetic transcriptional activation and is also prerequisite for histone H3 'Lys-4' and 'Lys-79' methylation (H3K4me and H3K79me, respectively). It thereby plays a central role in histone code and gene regulation. The RNF20/40 complex forms a H2B ubiquitin ligase complex in cooperation with the E2 enzyme UBE2A or UBE2B; reports about the cooperation with UBE2E1/UBCH are contradictory. Required for transcriptional activation of Hox genes. Recruited to the MDM2 promoter, probably by being recruited by p53/TP53, and thereby acts as a transcriptional coactivator. Mediates the polyubiquitination of PA2G4 leading to its proteasome-mediated degradation. The protein is E3 ubiquitin-protein ligase BRE1A (RNF20) of Bos taurus (Bovine).